The primary structure comprises 719 residues: 2'-5'-oligoadenylate synthase 2 (719 aa).

Glycine 2 carries N-myristoyl glycine lipidation. OAS domain regions lie at residues 11–335 (VPAQ…SWNV) and 343–683 (TPGH…WKVP). Lysine 378 carries the post-translational modification N6-acetyllysine. Serine 396 contributes to the ATP binding site. Residues aspartate 408, aspartate 410, and aspartate 481 each contribute to the Mg(2+) site. ATP-binding residues include arginine 544 and lysine 547.

Belongs to the 2-5A synthase family. As to quaternary structure, homodimer. It depends on Mg(2+) as a cofactor. Myristoylation is not essential for its activity. In terms of processing, glycosylated. Glycosylation is essential for its activity.

It localises to the cytoplasm. The protein resides in the perinuclear region. The catalysed reaction is 3 ATP = 5'-triphosphoadenylyl-(2'-&gt;5')-adenylyl-(2'-&gt;5')-adenosine + 2 diphosphate. Its activity is regulated as follows. Produced as a latent enzyme which is activated by double stranded RNA (dsRNA) generated during the course of viral infection. The dsRNA activator must be at least 15 nucleotides long, and no modification of the 2'-hydroxyl group is tolerated. ssRNA or dsDNA do not act as activators. Strongly inhibited by copper, iron and zinc ions. Partially inhibited by cobalt and nickel ions. Its function is as follows. Interferon-induced, dsRNA-activated antiviral enzyme which plays a critical role in cellular innate antiviral response. Activated by detection of double stranded RNA (dsRNA): polymerizes higher oligomers of 2'-5'-oligoadenylates (2-5A) from ATP which then bind to the inactive monomeric form of ribonuclease L (RNASEL) leading to its dimerization and subsequent activation. Activation of RNASEL leads to degradation of cellular as well as viral RNA, resulting in the inhibition of protein synthesis, thus terminating viral replication. Can mediate the antiviral effect via the classical RNASEL-dependent pathway or an alternative antiviral pathway independent of RNASEL. In addition, it may also play a role in other cellular processes such as apoptosis, cell growth, differentiation and gene regulation. May act as a negative regulator of lactation, stopping lactation in virally infected mammary gland lobules, thereby preventing transmission of viruses to neonates. Non-infected lobules would not be affected, allowing efficient pup feeding during infection. The sequence is that of 2'-5'-oligoadenylate synthase 2 from Homo sapiens (Human).